We begin with the raw amino-acid sequence, 250 residues long: Anamorsin homolog 2 (250 aa).

The tract at residues 1 to 102 (MNLKITINQQ…QTKKINIPQQ (102 aa)) is N-terminal SAM-like domain. Residues 102–149 (QDFNNCYGKYDYIEQKFQNQINFFKQVDLKGNQETIDENELLNDGVEV) are linker. The [2Fe-2S] cluster site is built by Cys155, Cys162, Cys165, and Cys167. The interval 155-167 (CASKPRACANCTC) is fe-S binding site A. Cys193, Cys196, Cys204, and Cys207 together coordinate [4Fe-4S] cluster. 2 short sequence motifs (cx2C motif) span residues 193–196 (CGSC) and 204–207 (CANC). The interval 193–207 (CGSCYLGDAFRCANC) is fe-S binding site B.

The protein belongs to the anamorsin family. Monomer. The cofactor is [2Fe-2S] cluster. Requires [4Fe-4S] cluster as cofactor.

The protein resides in the cytoplasm. It is found in the mitochondrion intermembrane space. In terms of biological role, component of the cytosolic iron-sulfur (Fe-S) protein assembly (CIA) machinery. Required for the maturation of extramitochondrial Fe-S proteins. Part of an electron transfer chain functioning in an early step of cytosolic Fe-S biogenesis, facilitating the de novo assembly of a [4Fe-4S] cluster on the cytosolic Fe-S scaffold complex. Electrons are transferred from NADPH via a FAD- and FMN-containing diflavin oxidoreductase. Together with the diflavin oxidoreductase, also required for the assembly of the diferric tyrosyl radical cofactor of ribonucleotide reductase (RNR), probably by providing electrons for reduction during radical cofactor maturation in the catalytic small subunit. The protein is Anamorsin homolog 2 of Paramecium tetraurelia.